Consider the following 305-residue polypeptide: Oxidoreductase swnR (305 aa).

It belongs to the NmrA-type oxidoreductase family. Isoflavone reductase subfamily.

It catalyses the reaction L-pipecolate + O2 = L-1-piperideine-6-carboxylate + H2O2 + H(+). It functions in the pathway mycotoxin biosynthesis. Its function is as follows. Oxidoreductase; part of the gene cluster that mediates the biosynthesis of swainsonine (SW), a cytotoxic fungal alkaloid and a potential cancer therapy drug. Swainsonine production occurs via a multibranched pathway and is dispensable for fungal colonization of plants and infection of insect hosts. The first step of swainsonine biosynthesis is the production of the precursor pipecolic acid (PA) via conversion of L-lysine (Lys) to 1-piperideine-6-carboxylate (P6C) by the aminotransferase swnA, the latter being further reduced to PA by the reductase swnR. The PKS-NRPS hybrid synthetase swnK uptakes and condensates PA and malonyl-CoA with and without skipping of the ketoreductase (KR) domain in order to produce 3 intermediates, 1-oxoindolizidine, (1S)-1-hydroxyindolizin, and (1R)-1-hydroxyindolizine; with the transisomer (1S)-1-hydroxyindolizin being predominant. The terminal thioester reductase (TE) domain of swnK is involved in reduction of the thioester bond to release the intermediate aldehydes. The oxidoreductase swnN could contribute to the reduction of 1-oxoindolizidine to (1S)-1-hydroxyindolizin and (1R)-1-hydroxyindolizine, contributing to the major route of SW production. The dioxygenase swnH2 would be responsible for the oxidization of (1R)-1-hydroxyindolizine into (1R,2S)-1,2-dihydroxyindolizine and of (1S)-1-hydroxyindolizin to yield both (1R,2S)-1,2-dihydroxyindolizine and (1S,2S)-1,2-dihydroxyindolizine. The dioxygenase swnH1 then performs the conversion of the 1,2-dihydroxyindolizine epimers to SW. This chain is Oxidoreductase swnR, found in Arthroderma benhamiae (strain ATCC MYA-4681 / CBS 112371) (Trichophyton mentagrophytes).